The sequence spans 239 residues: LexA repressor (239 aa).

The segment at residues 26–46 is a DNA-binding region (H-T-H motif); it reads FDEMKDALDLASKSGIHRLIT. Active-site for autocatalytic cleavage activity residues include S159 and K197.

It belongs to the peptidase S24 family. As to quaternary structure, homodimer.

It carries out the reaction Hydrolysis of Ala-|-Gly bond in repressor LexA.. Its function is as follows. Represses a number of genes involved in the response to DNA damage (SOS response), including recA and lexA. In the presence of single-stranded DNA, RecA interacts with LexA causing an autocatalytic cleavage which disrupts the DNA-binding part of LexA, leading to derepression of the SOS regulon and eventually DNA repair. The chain is LexA repressor from Allorhizobium ampelinum (strain ATCC BAA-846 / DSM 112012 / S4) (Agrobacterium vitis (strain S4)).